Here is a 354-residue protein sequence, read N- to C-terminus: Glycerol-1-phosphate dehydrogenase [NAD(P)+] (354 aa).

NAD(+) contacts are provided by residues 103–107 (GRAVD) and 125–128 (TAAS). Position 130 (Asp130) interacts with substrate. Residue Ser134 participates in NAD(+) binding. Position 176 (Asp176) interacts with substrate. Asp176 and His255 together coordinate Zn(2+). Residue His259 coordinates substrate. His271 contacts Zn(2+).

The protein belongs to the glycerol-1-phosphate dehydrogenase family. In terms of assembly, homodimer. The cofactor is Zn(2+).

The protein resides in the cytoplasm. It catalyses the reaction sn-glycerol 1-phosphate + NAD(+) = dihydroxyacetone phosphate + NADH + H(+). It carries out the reaction sn-glycerol 1-phosphate + NADP(+) = dihydroxyacetone phosphate + NADPH + H(+). The protein operates within membrane lipid metabolism; glycerophospholipid metabolism. Functionally, catalyzes the NAD(P)H-dependent reduction of dihydroxyacetonephosphate (DHAP or glycerone phosphate) to glycerol 1-phosphate (G1P). The G1P thus generated is used as the glycerophosphate backbone of phospholipids in the cellular membranes of Archaea. The sequence is that of Glycerol-1-phosphate dehydrogenase [NAD(P)+] from Cenarchaeum symbiosum (strain A).